The sequence spans 130 residues: Single-stranded DNA-binding protein 1 (130 aa).

The region spanning methionine 1–glutamate 104 is the SSB domain. The tract at residues asparagine 108–phenylalanine 130 is disordered.

As to quaternary structure, homotetramer.

In Streptococcus pyogenes serotype M18 (strain MGAS8232), this protein is Single-stranded DNA-binding protein 1 (ssb1).